The chain runs to 291 residues: MSTVLRFGIPKGSLEEATVDLFKQAGWQIGISSRSYFPTVDDGEMKCHLIRPQEMGKYVERGTIDVGIAGRDWIRENDSDVVEVCEMVYSKVSRRPVRWVLVVAQDSPVQGPEDLQGATISTELVEFTKRYFKERNIQVNVEFSWGATEAKVVDGLCDAIVEVTETGSTIRANNLRIVCDLMESVPVMVANKAAWEDPWKRAKIEQIATLLNSALRAEGMVGLKLNAPAEKVEAITGILPSQKAPTVAHLYKSDWVSIESILPEKEVRRIVPELLRLGAEGIIEYPLSKII.

Belongs to the ATP phosphoribosyltransferase family. Long subfamily. It depends on Mg(2+) as a cofactor.

The protein resides in the cytoplasm. It carries out the reaction 1-(5-phospho-beta-D-ribosyl)-ATP + diphosphate = 5-phospho-alpha-D-ribose 1-diphosphate + ATP. The protein operates within amino-acid biosynthesis; L-histidine biosynthesis; L-histidine from 5-phospho-alpha-D-ribose 1-diphosphate: step 1/9. Its activity is regulated as follows. Feedback inhibited by histidine. In terms of biological role, catalyzes the condensation of ATP and 5-phosphoribose 1-diphosphate to form N'-(5'-phosphoribosyl)-ATP (PR-ATP). Has a crucial role in the pathway because the rate of histidine biosynthesis seems to be controlled primarily by regulation of HisG enzymatic activity. The chain is ATP phosphoribosyltransferase from Trichlorobacter lovleyi (strain ATCC BAA-1151 / DSM 17278 / SZ) (Geobacter lovleyi).